The following is a 380-amino-acid chain: 5-amino-6-(D-ribitylamino)uracil--L-tyrosine 4-hydroxyphenyl transferase (380 aa).

One can recognise a Radical SAM core domain in the interval 56-303 (VTYIINRNIN…GAVARIYLGN (248 aa)). Residues Cys-70, Cys-74, and Cys-77 each contribute to the [4Fe-4S] cluster site.

Belongs to the radical SAM superfamily. CofH family. Consists of two subunits, CofG and CofH. [4Fe-4S] cluster is required as a cofactor.

The enzyme catalyses 5-amino-6-(D-ribitylamino)uracil + L-tyrosine + S-adenosyl-L-methionine = 5-amino-5-(4-hydroxybenzyl)-6-(D-ribitylimino)-5,6-dihydrouracil + 2-iminoacetate + 5'-deoxyadenosine + L-methionine + H(+). It functions in the pathway cofactor biosynthesis; coenzyme F0 biosynthesis. Functionally, catalyzes the radical-mediated synthesis of 5-amino-5-(4-hydroxybenzyl)-6-(D-ribitylimino)-5,6-dihydrouracil from 5-amino-6-(D-ribitylamino)uracil and L-tyrosine. The sequence is that of 5-amino-6-(D-ribitylamino)uracil--L-tyrosine 4-hydroxyphenyl transferase from Nostoc punctiforme (strain ATCC 29133 / PCC 73102).